The following is a 295-amino-acid chain: MEFRQLRYFVAAAEEGNVGAAARRLHISQPPVTRQIHALEQHLGVLLFERSARGVQLTPAGAAFLEDARRMLELGRTSVDRSRAASRGEIGQLDIGYLGTAIYQTVPALLHAFTQAVPGATLSLALMPKVRQIEALRAGTIHLGVGRFYPQEPGITVEHLHYERLYIAAGSSIARQLRQDPTLLRLKSESLVLFPKEGRPSFADEVIALMRRAGVEPRVTAIVEDVNAALGLVAAGAGVTLVPASVAAIRRPFVRTMEMADASDKVPVSLTYLTDSRVPVLRAFLDVARRGKGQK.

Residues 1 to 58 enclose the HTH lysR-type domain; it reads MEFRQLRYFVAAAEEGNVGAAARRLHISQPPVTRQIHALEQHLGVLLFERSARGVQLT. Residues 18 to 37 constitute a DNA-binding region (H-T-H motif); the sequence is VGAAARRLHISQPPVTRQIH.

It belongs to the LysR transcriptional regulatory family.

The protein localises to the cytoplasm. Its function is as follows. Involved in the regulation of 3-chlorocatechol degradation. Transcriptional regulator of tfdB expression. Acts as a repressor in the absence of its effector (either 2-cis-chlorodiene lactone or chloromaleylacetate) but acts as an activator when its effector is present. The chain is HTH-type transcriptional regulator TdfR (tfdR) from Cupriavidus pinatubonensis (strain JMP 134 / LMG 1197) (Cupriavidus necator (strain JMP 134)).